The sequence spans 99 residues: uncharacterized protein (99 aa).

This is an uncharacterized protein from Saccharolobus islandicus (Sulfolobus islandicus).